The sequence spans 308 residues: Probable manganese-dependent inorganic pyrophosphatase (308 aa).

Residues H9, D13, D15, D75, H97, and D149 each coordinate Mn(2+).

It belongs to the PPase class C family. It depends on Mn(2+) as a cofactor.

The protein localises to the cytoplasm. The enzyme catalyses diphosphate + H2O = 2 phosphate + H(+). This Staphylococcus carnosus (strain TM300) protein is Probable manganese-dependent inorganic pyrophosphatase.